Consider the following 242-residue polypeptide: tRNA uridine(34) hydroxylase (242 aa).

The 95-residue stretch at 128–222 (DGREVVMLDT…YFEETGGPGY (95 aa)) folds into the Rhodanese domain. The Cysteine persulfide intermediate role is filled by Cys-182.

This sequence belongs to the TrhO family.

The catalysed reaction is uridine(34) in tRNA + AH2 + O2 = 5-hydroxyuridine(34) in tRNA + A + H2O. Its function is as follows. Catalyzes oxygen-dependent 5-hydroxyuridine (ho5U) modification at position 34 in tRNAs. The protein is tRNA uridine(34) hydroxylase of Bordetella avium (strain 197N).